The following is a 147-amino-acid chain: Small ribosomal subunit protein bS6 (147 aa).

Residues 96–147 (VTEPSPMMKAKEERFTKRDDREERSDRSEAPRAEAPAKAEAPAKAEDEAAAE) are disordered. Residues 104 to 147 (KAKEERFTKRDDREERSDRSEAPRAEAPAKAEAPAKAEDEAAAE) are compositionally biased toward basic and acidic residues.

Belongs to the bacterial ribosomal protein bS6 family.

Its function is as follows. Binds together with bS18 to 16S ribosomal RNA. In Photobacterium profundum (strain SS9), this protein is Small ribosomal subunit protein bS6.